The primary structure comprises 141 residues: Aspartate 1-decarboxylase (141 aa).

Residue Ser25 is the Schiff-base intermediate with substrate; via pyruvic acid of the active site. Ser25 is subject to Pyruvic acid (Ser). Thr57 is a substrate binding site. The Proton donor role is filled by Tyr58. Residue 73–75 coordinates substrate; that stretch reads GAA.

Belongs to the PanD family. Heterooctamer of four alpha and four beta subunits. Requires pyruvate as cofactor. In terms of processing, is synthesized initially as an inactive proenzyme, which is activated by self-cleavage at a specific serine bond to produce a beta-subunit with a hydroxyl group at its C-terminus and an alpha-subunit with a pyruvoyl group at its N-terminus.

The protein localises to the cytoplasm. The catalysed reaction is L-aspartate + H(+) = beta-alanine + CO2. It functions in the pathway cofactor biosynthesis; (R)-pantothenate biosynthesis; beta-alanine from L-aspartate: step 1/1. Its function is as follows. Catalyzes the pyruvoyl-dependent decarboxylation of aspartate to produce beta-alanine. The sequence is that of Aspartate 1-decarboxylase from Salinispora arenicola (strain CNS-205).